Consider the following 37-residue polypeptide: Esculentin-2B (37 aa).

A disulfide bridge links Cys-31 with Cys-37.

The protein belongs to the frog skin active peptide (FSAP) family. Esculentin subfamily. Expressed by the skin glands.

The protein resides in the secreted. Functionally, shows antibacterial activity against representative Gram-negative and Gram-positive bacterial species, and hemolytic activity. This Pelophylax lessonae (Pool frog) protein is Esculentin-2B.